A 348-amino-acid polypeptide reads, in one-letter code: Dihydroorotase (348 aa).

The Zn(2+) site is built by H17 and H19. Substrate is bound by residues 19-21 and N45; that span reads HLR. Zn(2+)-binding residues include K103, H140, and H178. K103 carries the post-translational modification N6-carboxylysine. H140 is a substrate binding site. L223 serves as a coordination point for substrate. Position 251 (D251) interacts with Zn(2+). Residue D251 is part of the active site. Substrate is bound by residues H255 and A267.

Belongs to the metallo-dependent hydrolases superfamily. DHOase family. Class II DHOase subfamily. In terms of assembly, homodimer. The cofactor is Zn(2+).

It catalyses the reaction (S)-dihydroorotate + H2O = N-carbamoyl-L-aspartate + H(+). The protein operates within pyrimidine metabolism; UMP biosynthesis via de novo pathway; (S)-dihydroorotate from bicarbonate: step 3/3. In terms of biological role, catalyzes the reversible cyclization of carbamoyl aspartate to dihydroorotate. In Klebsiella pneumoniae (strain 342), this protein is Dihydroorotase.